The following is a 360-amino-acid chain: SVP1-like protein 2 (360 aa).

3 WD repeats span residues 12–50, 191–231, and 236–275; these read AHEP…LRMK, AHKS…LRFE, and LDRA…PQPE.

The protein belongs to the WD repeat PROPPIN family.

The protein localises to the vacuole membrane. Its subcellular location is the cytoplasmic vesicle membrane. Its function is as follows. Involved in mitochondrial or peroxisomal functions and amino acid signaling pathways. This Pichia angusta (Yeast) protein is SVP1-like protein 2 (HSV2).